The following is a 539-amino-acid chain: Kynureninase 2 (539 aa).

The segment at 60–87 (DGGVAGETKEPRVPNGVSSATKPNGTVN) is disordered. Polar residues predominate over residues 75–87 (GVSSATKPNGTVN). Pyridoxal 5'-phosphate contacts are provided by residues Leu-171, Thr-172, 199-202 (FPSD), Asp-290, His-293, and Tyr-315. Lys-316 bears the N6-(pyridoxal phosphate)lysine mark. The span at 340–352 (GGGGSGGVGGGRG) shows a compositional bias: gly residues. Residues 340-363 (GGGGSGGVGGGRGEGGDGDGGDGG) form a disordered region. Trp-379 and Asn-407 together coordinate pyridoxal 5'-phosphate.

The protein belongs to the kynureninase family. In terms of assembly, homodimer. Pyridoxal 5'-phosphate serves as cofactor.

It localises to the cytoplasm. The enzyme catalyses L-kynurenine + H2O = anthranilate + L-alanine + H(+). It catalyses the reaction 3-hydroxy-L-kynurenine + H2O = 3-hydroxyanthranilate + L-alanine + H(+). Its pathway is amino-acid degradation; L-kynurenine degradation; L-alanine and anthranilate from L-kynurenine: step 1/1. The protein operates within cofactor biosynthesis; NAD(+) biosynthesis; quinolinate from L-kynurenine: step 2/3. In terms of biological role, catalyzes the cleavage of L-kynurenine (L-Kyn) and L-3-hydroxykynurenine (L-3OHKyn) into anthranilic acid (AA) and 3-hydroxyanthranilic acid (3-OHAA), respectively. This chain is Kynureninase 2, found in Chaetomium globosum (strain ATCC 6205 / CBS 148.51 / DSM 1962 / NBRC 6347 / NRRL 1970) (Soil fungus).